Here is a 268-residue protein sequence, read N- to C-terminus: tRNA pseudouridine synthase A (268 aa).

The active-site Nucleophile is the Asp-52. Tyr-113 is a substrate binding site.

This sequence belongs to the tRNA pseudouridine synthase TruA family. Homodimer.

It catalyses the reaction uridine(38/39/40) in tRNA = pseudouridine(38/39/40) in tRNA. Functionally, formation of pseudouridine at positions 38, 39 and 40 in the anticodon stem and loop of transfer RNAs. The polypeptide is tRNA pseudouridine synthase A (Chlamydia abortus (strain DSM 27085 / S26/3) (Chlamydophila abortus)).